A 429-amino-acid polypeptide reads, in one-letter code: Glutamate-1-semialdehyde 2,1-aminomutase 2 (429 aa).

An N6-(pyridoxal phosphate)lysine modification is found at Lys268.

It belongs to the class-III pyridoxal-phosphate-dependent aminotransferase family. HemL subfamily. Homodimer. Requires pyridoxal 5'-phosphate as cofactor.

It is found in the cytoplasm. The enzyme catalyses (S)-4-amino-5-oxopentanoate = 5-aminolevulinate. The protein operates within porphyrin-containing compound metabolism; protoporphyrin-IX biosynthesis; 5-aminolevulinate from L-glutamyl-tRNA(Glu): step 2/2. This Bacillus cereus (strain AH820) protein is Glutamate-1-semialdehyde 2,1-aminomutase 2.